Consider the following 246-residue polypeptide: Uridylate kinase (246 aa).

20-23 lines the ATP pocket; that stretch reads KISG. The interval 28–33 is involved in allosteric activation by GTP; it reads GDQGYG. Residue Gly62 coordinates UMP. ATP is bound by residues Gly63 and Arg67. UMP-binding positions include Asp82 and 143–150; that span reads TGNPYFTT. ATP is bound by residues Thr170, Tyr176, and Asp179.

This sequence belongs to the UMP kinase family. Homohexamer.

It localises to the cytoplasm. The enzyme catalyses UMP + ATP = UDP + ADP. The protein operates within pyrimidine metabolism; CTP biosynthesis via de novo pathway; UDP from UMP (UMPK route): step 1/1. Its activity is regulated as follows. Allosterically activated by GTP. Inhibited by UTP. In terms of biological role, catalyzes the reversible phosphorylation of UMP to UDP. The polypeptide is Uridylate kinase (Cereibacter sphaeroides (strain ATCC 17023 / DSM 158 / JCM 6121 / CCUG 31486 / LMG 2827 / NBRC 12203 / NCIMB 8253 / ATH 2.4.1.) (Rhodobacter sphaeroides)).